The following is a 125-amino-acid chain: Type II secretion system protein I (125 aa).

Positions 1–5 (MKQQG) are cleaved as a propeptide — leader sequence. Methionine 6 carries the post-translational modification N-methylmethionine. A helical membrane pass occupies residues 6–26 (MTLLEVMVALVIFALAGLTVL).

This sequence belongs to the GSP I family. As to quaternary structure, type II secretion is composed of four main components: the outer membrane complex, the inner membrane complex, the cytoplasmic secretion ATPase and the periplasm-spanning pseudopilus. Interacts with core component OutG. In terms of processing, cleaved by prepilin peptidase. Methylated by prepilin peptidase at the amino group of the N-terminal methionine once the leader sequence is cleaved by prepilin peptidase.

The protein resides in the cell inner membrane. Component of the type II secretion system required for the energy-dependent secretion of extracellular factors such as proteases and toxins from the periplasm. Part of the pseudopilus tip complex that is critical for the recognition and binding of secretion substrates. This is Type II secretion system protein I (outI) from Dickeya chrysanthemi (Pectobacterium chrysanthemi).